A 223-amino-acid polypeptide reads, in one-letter code: Deoxyribose-phosphate aldolase (223 aa).

Asp92 (proton donor/acceptor) is an active-site residue. Lys154 (schiff-base intermediate with acetaldehyde) is an active-site residue. Lys182 serves as the catalytic Proton donor/acceptor.

Belongs to the DeoC/FbaB aldolase family. DeoC type 1 subfamily.

It localises to the cytoplasm. It carries out the reaction 2-deoxy-D-ribose 5-phosphate = D-glyceraldehyde 3-phosphate + acetaldehyde. It functions in the pathway carbohydrate degradation; 2-deoxy-D-ribose 1-phosphate degradation; D-glyceraldehyde 3-phosphate and acetaldehyde from 2-deoxy-alpha-D-ribose 1-phosphate: step 2/2. Its function is as follows. Catalyzes a reversible aldol reaction between acetaldehyde and D-glyceraldehyde 3-phosphate to generate 2-deoxy-D-ribose 5-phosphate. The protein is Deoxyribose-phosphate aldolase of Haemophilus influenzae (strain 86-028NP).